The following is a 689-amino-acid chain: Elongation factor G (689 aa).

Residues 8 to 282 form the tr-type G domain; the sequence is DKVRNIGIMA…AIVRYLPSPL (275 aa). Residues 17–24, 81–85, and 135–138 each bind GTP; these read AHIDAGKT, DTPGH, and NKMD.

The protein belongs to the TRAFAC class translation factor GTPase superfamily. Classic translation factor GTPase family. EF-G/EF-2 subfamily.

Its subcellular location is the cytoplasm. In terms of biological role, catalyzes the GTP-dependent ribosomal translocation step during translation elongation. During this step, the ribosome changes from the pre-translocational (PRE) to the post-translocational (POST) state as the newly formed A-site-bound peptidyl-tRNA and P-site-bound deacylated tRNA move to the P and E sites, respectively. Catalyzes the coordinated movement of the two tRNA molecules, the mRNA and conformational changes in the ribosome. The chain is Elongation factor G from Thermoanaerobacter pseudethanolicus (strain ATCC 33223 / 39E) (Clostridium thermohydrosulfuricum).